The sequence spans 173 residues: Interferon gamma (173 aa).

The first 22 residues, 1–22 (MNATHCILALQLCLLAISGCSS), serve as a signal peptide directing secretion. Gln23 bears the Pyrrolidone carboxylic acid mark. N-linked (GlcNAc...) asparagine glycans are attached at residues Asn38 and Asn105.

Belongs to the type II (or gamma) interferon family. Homodimer. Interacts with IFNGR1 (via extracellular domain); this interaction promotes IFNGR1 dimerization. As to expression, released primarily from activated T lymphocytes.

It is found in the secreted. Type II interferon produced by immune cells such as T-cells and NK cells that plays crucial roles in antimicrobial, antiviral, and antitumor responses by activating effector immune cells and enhancing antigen presentation. Primarily signals through the JAK-STAT pathway after interaction with its receptor IFNGR1 to affect gene regulation. Upon IFNG binding, IFNGR1 intracellular domain opens out to allow association of downstream signaling components JAK2, JAK1 and STAT1, leading to STAT1 activation, nuclear translocation and transcription of IFNG-regulated genes. Many of the induced genes are transcription factors such as IRF1 that are able to further drive regulation of a next wave of transcription. Plays a role in class I antigen presentation pathway by inducing a replacement of catalytic proteasome subunits with immunoproteasome subunits. In turn, increases the quantity, quality, and repertoire of peptides for class I MHC loading. Increases the efficiency of peptide generation also by inducing the expression of activator PA28 that associates with the proteasome and alters its proteolytic cleavage preference. Up-regulates as well MHC II complexes on the cell surface by promoting expression of several key molecules such as cathepsins B/CTSB, H/CTSH, and L/CTSL. Participates in the regulation of hematopoietic stem cells during development and under homeostatic conditions by affecting their development, quiescence, and differentiation. This Meriones unguiculatus (Mongolian jird) protein is Interferon gamma (IFNG).